We begin with the raw amino-acid sequence, 254 residues long: MAVITMKSLLEAGVHFGHQVKRLDPRMKRFIFSERNEIHILDLQKTLQGIKDSYELVQSVIKNGKKVLFVGTKKQASEIIEQEAKRSEMPYVNNRWLGGMLSNFNTIKKSVQKLKKLEKMEVDGTFEMISKKEVSQINREKLKLAKNLTGIKDMEELPGAIFIIDPKREQIVINEARKLGITIIAVVDTNCNPDVIDCPIPGNDDAIRSVALFTKIISDAILESDKEVGIQIVENLNEEDLMSEIEVKNERKES.

Belongs to the universal ribosomal protein uS2 family.

This chain is Small ribosomal subunit protein uS2, found in Borrelia recurrentis (strain A1).